Consider the following 631-residue polypeptide: Chaperone protein HtpG (631 aa).

An a; substrate-binding region spans residues 1–339; that stretch reads MSTNQETRGF…SNDLPLNVSR (339 aa). Residues 340–555 are b; sequence EILQDNKVTS…DDQMTTQMAK (216 aa). The tract at residues 556–631 is c; that stretch reads LFAAAGQAMP…NTLLSKLTSH (76 aa).

This sequence belongs to the heat shock protein 90 family. As to quaternary structure, homodimer.

It is found in the cytoplasm. In terms of biological role, molecular chaperone. Has ATPase activity. This chain is Chaperone protein HtpG, found in Pasteurella multocida (strain Pm70).